The primary structure comprises 270 residues: 4-hydroxy-tetrahydrodipicolinate reductase (270 aa).

Residues 11 to 16 and glutamate 37 contribute to the NAD(+) site; that span reads GASGRM. Arginine 38 provides a ligand contact to NADP(+). NAD(+) contacts are provided by residues 101–103 and 125–128; these read GTT and SPNM. Histidine 158 acts as the Proton donor/acceptor in catalysis. Histidine 159 contacts (S)-2,3,4,5-tetrahydrodipicolinate. Catalysis depends on lysine 162, which acts as the Proton donor. Position 168-169 (168-169) interacts with (S)-2,3,4,5-tetrahydrodipicolinate; the sequence is GT.

It belongs to the DapB family.

The protein resides in the cytoplasm. It catalyses the reaction (S)-2,3,4,5-tetrahydrodipicolinate + NAD(+) + H2O = (2S,4S)-4-hydroxy-2,3,4,5-tetrahydrodipicolinate + NADH + H(+). The catalysed reaction is (S)-2,3,4,5-tetrahydrodipicolinate + NADP(+) + H2O = (2S,4S)-4-hydroxy-2,3,4,5-tetrahydrodipicolinate + NADPH + H(+). The protein operates within amino-acid biosynthesis; L-lysine biosynthesis via DAP pathway; (S)-tetrahydrodipicolinate from L-aspartate: step 4/4. In terms of biological role, catalyzes the conversion of 4-hydroxy-tetrahydrodipicolinate (HTPA) to tetrahydrodipicolinate. The protein is 4-hydroxy-tetrahydrodipicolinate reductase of Shewanella denitrificans (strain OS217 / ATCC BAA-1090 / DSM 15013).